Here is a 122-residue protein sequence, read N- to C-terminus: uncharacterized protein (122 aa).

Residues 1 to 10 (MGTGLRSQSL) show a composition bias toward polar residues. The disordered stretch occupies residues 1-68 (MGTGLRSQSL…GQEWLPGSLG (68 aa)). The span at 40 to 56 (QGREKSRSSDGGPERLD) shows a compositional bias: basic and acidic residues.

This is an uncharacterized protein from Bos taurus (Bovine).